The following is a 101-amino-acid chain: DNA-binding protein Fis (101 aa).

The H-T-H motif DNA-binding region spans 77–96; sequence QTRAANMLGINRGTLRKKLK.

It belongs to the transcriptional regulatory Fis family. In terms of assembly, homodimer.

In terms of biological role, activates ribosomal RNA transcription. Plays a direct role in upstream activation of rRNA promoters. In Shewanella pealeana (strain ATCC 700345 / ANG-SQ1), this protein is DNA-binding protein Fis.